Consider the following 876-residue polypeptide: Exosome complex component 10 homolog (876 aa).

Residues 1–22 (MSGEESMPDEEQKQSEEEEEMI) form a disordered region. The 3'-5' exonuclease domain occupies 279–445 (TMIDTKEKLE…YSYDMLREQL (167 aa)). The Mg(2+) site is built by D303, E305, D361, and D430. Residues 489-569 (NTRQDYALTH…VEARDVKLEK (81 aa)) enclose the HRDC domain. Basic and acidic residues-rich tracts occupy residues 690-730 (EKQE…EFDA), 741-752 (VPDDPNKPKDPE), and 834-847 (KPVR…DPFH). Positions 690 to 876 (EKQEEEERKE…NRQGTINYKK (187 aa)) are disordered. Over residues 848–861 (QKYRLKNKTKKNMA) the composition is skewed to basic residues.

Belongs to the exosome component 10/RRP6 family. As to quaternary structure, component of the RNA exosome complex. Interacts with crn-5. It depends on Mg(2+) as a cofactor. In terms of tissue distribution, ubiquitously expressed.

It localises to the nucleus. Its subcellular location is the nucleolus. It is found in the nucleoplasm. Its function is as follows. Catalytic component of the RNA exosome complex which has 3'-&gt;5' exoribonuclease activity and participates in a multitude of cellular RNA processing and degradation events. Involved in apoptotic DNA degradation. Involved in regulation of antisense ribosomal siRNA production. Involved in response to cold-warm shock. In Caenorhabditis elegans, this protein is Exosome complex component 10 homolog.